Consider the following 83-residue polypeptide: Cytochrome b559 subunit alpha (83 aa).

A helical transmembrane segment spans residues Val21 to Trp35. His23 contacts heme.

Belongs to the PsbE/PsbF family. Heterodimer of an alpha subunit and a beta subunit. PSII is composed of 1 copy each of membrane proteins PsbA, PsbB, PsbC, PsbD, PsbE, PsbF, PsbH, PsbI, PsbJ, PsbK, PsbL, PsbM, PsbT, PsbX, PsbY, PsbZ, Psb30/Ycf12, at least 3 peripheral proteins of the oxygen-evolving complex and a large number of cofactors. It forms dimeric complexes. Heme b serves as cofactor.

It is found in the plastid. It localises to the chloroplast thylakoid membrane. In terms of biological role, this b-type cytochrome is tightly associated with the reaction center of photosystem II (PSII). PSII is a light-driven water:plastoquinone oxidoreductase that uses light energy to abstract electrons from H(2)O, generating O(2) and a proton gradient subsequently used for ATP formation. It consists of a core antenna complex that captures photons, and an electron transfer chain that converts photonic excitation into a charge separation. This is Cytochrome b559 subunit alpha from Acorus calamus (Sweet flag).